The following is a 424-amino-acid chain: 3-oxo-tetronate kinase (424 aa).

Residues Ser260, Gly364–Thr367, and Gly407 contribute to the ATP site.

The protein belongs to the four-carbon acid sugar kinase family.

The enzyme catalyses 3-dehydro-L-erythronate + ATP = 3-dehydro-4-O-phospho-L-erythronate + ADP + H(+). The catalysed reaction is 3-dehydro-D-erythronate + ATP = 3-dehydro-4-O-phospho-D-erythronate + ADP + H(+). Functionally, catalyzes the ATP-dependent phosphorylation of 3-oxo-tetronate to 3-oxo-tetronate 4-phosphate. This is 3-oxo-tetronate kinase from Pectobacterium atrosepticum (strain SCRI 1043 / ATCC BAA-672) (Erwinia carotovora subsp. atroseptica).